Reading from the N-terminus, the 54-residue chain is Rubredoxin (54 aa).

Positions methionine 1–valine 54 constitute a Rubredoxin-like domain. Fe cation-binding residues include cysteine 6, cysteine 9, cysteine 39, and cysteine 42.

The protein belongs to the rubredoxin family. The cofactor is Fe(3+).

It localises to the cytoplasm. Its pathway is hydrocarbon metabolism; alkane degradation. In terms of biological role, involved in the hydrocarbon hydroxylating system, which transfers electrons from NADH to rubredoxin reductase and then through rubredoxin to alkane 1 monooxygenase. This chain is Rubredoxin (rubA), found in Acinetobacter baylyi (strain ATCC 33305 / BD413 / ADP1).